Reading from the N-terminus, the 399-residue chain is uncharacterized protein (399 aa).

WD repeat units lie at residues 59–99, 102–141, 144–185, 187–227, 241–280, 283–322, 324–363, and 366–399; these read EHKD…QICQ, GHKDSIVAIDWSFDGTYIATGGMDSQVRLWKSSTGFEFIT, ETVD…QVMY, HTAP…PECR, ETAAGWTSFDCNAEGNVLFLGGSSGKVKVVNINSSHILAS, AQTESVEAIALCTALPICACASVDGTVALYDSASLKFRKS, PHEQAVIDCKFLPNTPYLLTACADCVIRKWDVRSGQLLGE, and GHQEPILCMAITPDGKRVVTGSDDTELLVFDCEH.

It is found in the cytoplasm. The protein localises to the nucleus. This is an uncharacterized protein from Schizosaccharomyces pombe (strain 972 / ATCC 24843) (Fission yeast).